Consider the following 377-residue polypeptide: Putative glutamate--cysteine ligase 2 (377 aa).

This sequence belongs to the glutamate--cysteine ligase type 2 family. YbdK subfamily.

The enzyme catalyses L-cysteine + L-glutamate + ATP = gamma-L-glutamyl-L-cysteine + ADP + phosphate + H(+). Its function is as follows. ATP-dependent carboxylate-amine ligase which exhibits weak glutamate--cysteine ligase activity. This is Putative glutamate--cysteine ligase 2 from Ralstonia pickettii (strain 12J).